The chain runs to 380 residues: Cytochrome b (380 aa).

4 consecutive transmembrane segments (helical) span residues 34-54, 78-99, 114-134, and 179-199; these read FGSLLGICLATQILTGLLLAM, WLIRNLHANGASFFFICVYLHI, WNTGILLLLTLMATAFVGYVL, and FFALHFLLPFAIAGLTLIHLT. Positions 84 and 98 each coordinate heme b. His-183 and His-197 together coordinate heme b. His-202 is an a ubiquinone binding site. Transmembrane regions (helical) follow at residues 227 to 247, 289 to 309, 321 to 341, and 348 to 368; these read LKDALGFMLMFLPLTTLALFS, LGGVLALAASVLILFLSPLLH, LSQLLFWTLVANLFILTWVGS, and FIIIGQLASLTYFTILLILFP.

The protein belongs to the cytochrome b family. In terms of assembly, the cytochrome bc1 complex contains 11 subunits: 3 respiratory subunits (MT-CYB, CYC1 and UQCRFS1), 2 core proteins (UQCRC1 and UQCRC2) and 6 low-molecular weight proteins (UQCRH/QCR6, UQCRB/QCR7, UQCRQ/QCR8, UQCR10/QCR9, UQCR11/QCR10 and a cleavage product of UQCRFS1). This cytochrome bc1 complex then forms a dimer. Heme b is required as a cofactor.

It is found in the mitochondrion inner membrane. Its function is as follows. Component of the ubiquinol-cytochrome c reductase complex (complex III or cytochrome b-c1 complex) that is part of the mitochondrial respiratory chain. The b-c1 complex mediates electron transfer from ubiquinol to cytochrome c. Contributes to the generation of a proton gradient across the mitochondrial membrane that is then used for ATP synthesis. The protein is Cytochrome b (MT-CYB) of Oceanites oceanicus (Wilson's storm petrel).